We begin with the raw amino-acid sequence, 211 residues long: Stromal cell-derived factor 2 (211 aa).

The N-terminal stretch at 1 to 18 is a signal peptide; it reads MAVLSLLLLGGLWSAVGA. MIR domains lie at 21-75, 83-138, and 139-193; these read MAVV…IRGK, GTPI…VLCN, and GPYW…AMEG.

In terms of tissue distribution, ubiquitously expressed with highest expression in liver and kidney.

Its subcellular location is the secreted. This Mus musculus (Mouse) protein is Stromal cell-derived factor 2 (Sdf2).